A 376-amino-acid chain; its full sequence is Protein-glutamate methylesterase/protein-glutamine glutaminase (376 aa).

Positions 5–122 (KVLIVDDSAL…QHTFEDYTDE (118 aa)) constitute a Response regulatory domain. The residue at position 56 (D56) is a 4-aspartylphosphate. Positions 185-376 (SKPSHKVIAL…PEKILALIKK (192 aa)) constitute a CheB-type methylesterase domain. Active-site residues include S197, H223, and D319.

Belongs to the CheB family. Phosphorylated by CheA. Phosphorylation of the N-terminal regulatory domain activates the methylesterase activity.

It is found in the cytoplasm. The catalysed reaction is [protein]-L-glutamate 5-O-methyl ester + H2O = L-glutamyl-[protein] + methanol + H(+). It catalyses the reaction L-glutaminyl-[protein] + H2O = L-glutamyl-[protein] + NH4(+). In terms of biological role, involved in chemotaxis. Part of a chemotaxis signal transduction system that modulates chemotaxis in response to various stimuli. Catalyzes the demethylation of specific methylglutamate residues introduced into the chemoreceptors (methyl-accepting chemotaxis proteins or MCP) by CheR. Also mediates the irreversible deamidation of specific glutamine residues to glutamic acid. The protein is Protein-glutamate methylesterase/protein-glutamine glutaminase of Hydrogenovibrio crunogenus (strain DSM 25203 / XCL-2) (Thiomicrospira crunogena).